The chain runs to 221 residues: Interleukin-12 subunit alpha (221 aa).

The first 25 residues, 1–25, serve as a signal peptide directing secretion; sequence MCPLRSLLLISTLVLLHHLPHLSLG. Cystine bridges form between C39–C112, C66–C198, and C87–C125. N95 carries an N-linked (GlcNAc...) asparagine glycan.

Belongs to the IL-6 superfamily. Heterodimer with IL12B; disulfide-linked. This heterodimer is known as interleukin IL-12. Heterodimer with EBI3/IL27B; not disulfide-linked. This heterodimer is known as interleukin IL-35. Interacts with NBR1; this interaction promotes IL-12 secretion.

The protein localises to the secreted. In terms of biological role, heterodimerizes with IL12B to form the IL-12 cytokine or with EBI3/IL27B to form the IL-35 cytokine. IL-12 is primarily produced by professional antigen-presenting cells (APCs) such as B-cells and dendritic cells (DCs) as well as macrophages and granulocytes and regulates T-cell and natural killer-cell responses, induces the production of interferon-gamma (IFN-gamma), favors the differentiation of T-helper 1 (Th1) cells and is an important link between innate resistance and adaptive immunity. Mechanistically, exerts its biological effects through a receptor composed of IL12R1 and IL12R2 subunits. Binding to the receptor results in the rapid tyrosine phosphorylation of a number of cellular substrates including the JAK family kinases TYK2 and JAK2. In turn, recruited STAT4 gets phosphorylated and translocates to the nucleus where it regulates cytokine/growth factor responsive genes. As part of IL-35, plays essential roles in maintaining the immune homeostasis of the liver microenvironment and also functions as an immune-suppressive cytokine. Mediates biological events through unconventional receptors composed of IL12RB2 and gp130/IL6ST heterodimers or homodimers. Signaling requires the transcription factors STAT1 and STAT4, which form a unique heterodimer that binds to distinct DNA sites. This chain is Interleukin-12 subunit alpha (IL12A), found in Bos taurus (Bovine).